The primary structure comprises 245 residues: ATP synthase subunit a (245 aa).

The next 7 helical transmembrane spans lie at L5 to V25, I37 to A57, Y99 to F119, F125 to L145, F157 to F177, L187 to F209, and S221 to A241.

The protein belongs to the ATPase A chain family. As to quaternary structure, F-type ATPases have 2 components, CF(1) - the catalytic core - and CF(0) - the membrane proton channel. CF(1) has five subunits: alpha(3), beta(3), gamma(1), delta(1), epsilon(1). CF(0) has three main subunits: a(1), b(2) and c(9-12). The alpha and beta chains form an alternating ring which encloses part of the gamma chain. CF(1) is attached to CF(0) by a central stalk formed by the gamma and epsilon chains, while a peripheral stalk is formed by the delta and b chains.

It localises to the cell inner membrane. Its function is as follows. Key component of the proton channel; it plays a direct role in the translocation of protons across the membrane. This is ATP synthase subunit a from Koribacter versatilis (strain Ellin345).